Reading from the N-terminus, the 148-residue chain is Cytochrome c oxidase subunit 6, mitochondrial (148 aa).

The transit peptide at 1–40 directs the protein to the mitochondrion; sequence MASFFRTAVRGPSAGLFRAVARPQPIAARVSLFSTSSRFR.

The protein belongs to the cytochrome c oxidase subunit 5A family. In terms of assembly, component of the cytochrome c oxidase (complex IV, CIV), a multisubunit enzyme composed of 11 subunits. The complex is composed of a catalytic core of 3 subunits Cox1, Cox2 and Cox3, encoded in the mitochondrial DNA, and 8 supernumerary subunits Cox4, Cox5a/Cox5, Cox6, Cox7, Cox8, Cox7a/Cox9, Cox6b/Cox12 and Cox6a/Cox13, which are encoded in the nuclear genome. The complex exists as a monomer or a dimer and forms respiratory supercomplexes (SCs) in the inner mitochondrial membrane with NADH-ubiquinone oxidoreductase (complex I, CI) and ubiquinol-cytochrome c oxidoreductase (cytochrome b-c1 complex, complex III, CIII), resulting in various different assemblies (supercomplexes I(1)IV(1), I(1)III(3)IV(2), III(2)IV(1) and III(2)IV(2) as well as larger supercomplexes of compositions like I(1)III(2)IV(5-6)).

The protein localises to the mitochondrion inner membrane. It participates in energy metabolism; oxidative phosphorylation. In terms of biological role, component of the cytochrome c oxidase, the last enzyme in the mitochondrial electron transport chain which drives oxidative phosphorylation. The respiratory chain contains 3 multisubunit complexes succinate dehydrogenase (complex II, CII), ubiquinol-cytochrome c oxidoreductase (cytochrome b-c1 complex, complex III, CIII) and cytochrome c oxidase (complex IV, CIV), that cooperate to transfer electrons derived from NADH and succinate to molecular oxygen, creating an electrochemical gradient over the inner membrane that drives transmembrane transport and the ATP synthase. Cytochrome c oxidase is the component of the respiratory chain that catalyzes the reduction of oxygen to water. Electrons originating from reduced cytochrome c in the intermembrane space (IMS) are transferred via the dinuclear copper A center (CU(A)) of Cox2 and heme A of Cox1 to the active site in Cox1, a binuclear center (BNC) formed by heme A3 and copper B (CU(B)). The BNC reduces molecular oxygen to 2 water molecules using 4 electrons from cytochrome c in the IMS and 4 protons from the mitochondrial matrix. This chain is Cytochrome c oxidase subunit 6, mitochondrial (cox-6), found in Neurospora crassa (strain ATCC 24698 / 74-OR23-1A / CBS 708.71 / DSM 1257 / FGSC 987).